The primary structure comprises 202 residues: ATP-dependent Clp protease proteolytic subunit (202 aa).

Serine 106 functions as the Nucleophile in the catalytic mechanism. Residue histidine 131 is part of the active site.

It belongs to the peptidase S14 family. In terms of assembly, fourteen ClpP subunits assemble into 2 heptameric rings which stack back to back to give a disk-like structure with a central cavity, resembling the structure of eukaryotic proteasomes.

The protein localises to the cytoplasm. It catalyses the reaction Hydrolysis of proteins to small peptides in the presence of ATP and magnesium. alpha-casein is the usual test substrate. In the absence of ATP, only oligopeptides shorter than five residues are hydrolyzed (such as succinyl-Leu-Tyr-|-NHMec, and Leu-Tyr-Leu-|-Tyr-Trp, in which cleavage of the -Tyr-|-Leu- and -Tyr-|-Trp bonds also occurs).. In terms of biological role, cleaves peptides in various proteins in a process that requires ATP hydrolysis. Has a chymotrypsin-like activity. Plays a major role in the degradation of misfolded proteins. The protein is ATP-dependent Clp protease proteolytic subunit of Shewanella sp. (strain W3-18-1).